The chain runs to 120 residues: U13-lycotoxin-Ls1a (120 aa).

Residues 1 to 16 (MKILFVLISILYAVYC) form the signal peptide. The propeptide occupies 17–54 (FSSEEDVDSAYLANELEPVEDINSEQYAALEPKEEQGR). Cystine bridges form between C56–C70, C63–C76, C69–C87, and C78–C85. Residues 56 to 95 (CADMGQDCKDDCDCCLNIATCNCWFGRYFCSCTFGDYQTC) form the Agouti domain.

The protein belongs to the neurotoxin 05 (agouti) family. Contains 6 disulfide bonds. Expressed by the venom gland.

It localises to the secreted. In Lycosa singoriensis (Wolf spider), this protein is U13-lycotoxin-Ls1a.